We begin with the raw amino-acid sequence, 208 residues long: Porimin (208 aa).

The N-terminal stretch at 1–26 (MGLGARGAWAALLLGTLQVLALLGAA) is a signal peptide. Residues 27–166 (HESAAMAASA…EAKKGSKFDT (140 aa)) lie on the Extracellular side of the membrane. Residues 42 to 57 (GLPHNSSANSTETLQH) show a composition bias toward polar residues. The disordered stretch occupies residues 42–125 (GLPHNSSANS…PKTTSVSQNT (84 aa)). 7 N-linked (GlcNAc...) asparagine glycosylation sites follow: Asn46, Asn50, Asn64, Asn68, Asn83, Asn96, and Asn106. A compositionally biased stretch (polar residues) spans 65–107 (ETSNSTVKPPTSVASDSSNTTVTTMKPTAASNTTTPGMVSTNM). Residues 108-122 (TSTTLKSTPKTTSVS) are compositionally biased toward low complexity. 2 N-linked (GlcNAc...) asparagine glycosylation sites follow: Asn124 and Asn138. Residues 167-187 (GSFVGGIVLTLGVLSILYIGC) traverse the membrane as a helical segment. Residues 188 to 208 (KMYYSRRGIRYRTIDEHDAII) lie on the Cytoplasmic side of the membrane.

Belongs to the CD164 family. In terms of tissue distribution, ubiquitous. Not expressed in ovary. Expressed in keratinocytes.

The protein resides in the membrane. Its function is as follows. Implicated in oncotic cell death, characterized by cell swelling, organelle swelling, vacuolization and increased membrane permeability. This chain is Porimin (TMEM123), found in Homo sapiens (Human).